The chain runs to 246 residues: 3-deoxy-manno-octulosonate cytidylyltransferase (246 aa).

Belongs to the KdsB family.

It is found in the cytoplasm. The catalysed reaction is 3-deoxy-alpha-D-manno-oct-2-ulosonate + CTP = CMP-3-deoxy-beta-D-manno-octulosonate + diphosphate. It participates in nucleotide-sugar biosynthesis; CMP-3-deoxy-D-manno-octulosonate biosynthesis; CMP-3-deoxy-D-manno-octulosonate from 3-deoxy-D-manno-octulosonate and CTP: step 1/1. Its pathway is bacterial outer membrane biogenesis; lipopolysaccharide biosynthesis. Activates KDO (a required 8-carbon sugar) for incorporation into bacterial lipopolysaccharide in Gram-negative bacteria. This is 3-deoxy-manno-octulosonate cytidylyltransferase from Chloroherpeton thalassium (strain ATCC 35110 / GB-78).